A 213-amino-acid polypeptide reads, in one-letter code: Orotate phosphoribosyltransferase (213 aa).

Lys-26 provides a ligand contact to 5-phospho-alpha-D-ribose 1-diphosphate. Residue 34 to 35 (FF) participates in orotate binding. 5-phospho-alpha-D-ribose 1-diphosphate-binding positions include 72-73 (YK), Arg-99, Lys-100, Lys-103, His-105, and 124-132 (DDVITAGTA). Residues Thr-128 and Arg-156 each coordinate orotate.

Belongs to the purine/pyrimidine phosphoribosyltransferase family. PyrE subfamily. As to quaternary structure, homodimer. Mg(2+) is required as a cofactor.

It catalyses the reaction orotidine 5'-phosphate + diphosphate = orotate + 5-phospho-alpha-D-ribose 1-diphosphate. It functions in the pathway pyrimidine metabolism; UMP biosynthesis via de novo pathway; UMP from orotate: step 1/2. Catalyzes the transfer of a ribosyl phosphate group from 5-phosphoribose 1-diphosphate to orotate, leading to the formation of orotidine monophosphate (OMP). This is Orotate phosphoribosyltransferase from Shigella sonnei (strain Ss046).